The primary structure comprises 184 residues: Dirigent protein 13 (184 aa).

Residues Met1–Ser25 form the signal peptide. Cys36 and Cys182 form a disulfide bridge. N-linked (GlcNAc...) asparagine glycosylation is found at Asn55 and Asn119.

The protein belongs to the plant dirigent protein family. As to quaternary structure, homodimer. Expressed in root vasculature and meristems, cotyledons, flowers, siliques, and leaf trichomes. Localized in the interfascicular/vascular cambia and developing xylem.

Its subcellular location is the secreted. It is found in the extracellular space. The protein localises to the apoplast. Dirigent proteins impart stereoselectivity on the phenoxy radical-coupling reaction, yielding optically active lignans from two molecules of coniferyl alcohol in the biosynthesis of lignans, flavonolignans, and alkaloids and thus plays a central role in plant secondary metabolism. The sequence is that of Dirigent protein 13 (DIR13) from Arabidopsis thaliana (Mouse-ear cress).